Reading from the N-terminus, the 153-residue chain is Putative transcription factor YdeB (153 aa).

This sequence belongs to the CarD family.

The chain is Putative transcription factor YdeB (ydeB) from Bacillus subtilis (strain 168).